The sequence spans 382 residues: Chaperone protein DnaJ (382 aa).

The J domain maps to 4–69 (DYYEVLGVSR…DKRRRYDQFG (66 aa)). The CR-type zinc-finger motif lies at 138 to 219 (GVEKTIKIKK…CYGEGIKQGE (82 aa)). Residues cysteine 151, cysteine 154, cysteine 167, cysteine 170, cysteine 193, cysteine 196, cysteine 207, and cysteine 210 each contribute to the Zn(2+) site. CXXCXGXG motif repeat units lie at residues 151-158 (CKECNGSG), 167-174 (CPTCHGAG), 193-200 (CPTCGGEG), and 207-214 (CPSCYGEG).

The protein belongs to the DnaJ family. Homodimer. Zn(2+) is required as a cofactor.

The protein resides in the cytoplasm. Participates actively in the response to hyperosmotic and heat shock by preventing the aggregation of stress-denatured proteins and by disaggregating proteins, also in an autonomous, DnaK-independent fashion. Unfolded proteins bind initially to DnaJ; upon interaction with the DnaJ-bound protein, DnaK hydrolyzes its bound ATP, resulting in the formation of a stable complex. GrpE releases ADP from DnaK; ATP binding to DnaK triggers the release of the substrate protein, thus completing the reaction cycle. Several rounds of ATP-dependent interactions between DnaJ, DnaK and GrpE are required for fully efficient folding. Also involved, together with DnaK and GrpE, in the DNA replication of plasmids through activation of initiation proteins. This chain is Chaperone protein DnaJ, found in Chlorobium luteolum (strain DSM 273 / BCRC 81028 / 2530) (Pelodictyon luteolum).